We begin with the raw amino-acid sequence, 686 residues long: Bromodomain-containing factor 1 (686 aa).

2 disordered regions span residues 1 to 69 and 85 to 150; these read MTDI…PAGL and NGYN…NPIP. The span at 9-25 shows a compositional bias: low complexity; that stretch reads NDVDVNGNNVNDDVSSN. The segment covering 99-120 has biased composition (basic and acidic residues); the sequence is QGLKKEEGGQGTKQEDLDENSK. Over residues 130–139 the composition is skewed to pro residues; the sequence is EPAPAPPPEP. One can recognise a Bromo 1 domain in the interval 145–254; the sequence is PQNPIPKHQQ…ASFEKHMLNM (110 aa). Position 270 is a phosphoserine (Ser270). The tract at residues 283-304 is disordered; sequence QTHNGRPKRTIHPPKSKDIYPY. Basic residues predominate over residues 287–296; sequence GRPKRTIHPP. Residues 312-421 enclose the Bromo 2 domain; sequence KRLQQAMKFC…EVFNSKWADR (110 aa). 4 disordered regions span residues 424-447, 486-523, 594-636, and 649-686; these read LDDYDSDEDSRTQGDYDDYESEYS, IRKERRLARGSKKRGKRSKGRSGSKNASSKGRRDKKNK, SSGA…EQSR, and DSASPLSQNGSPGQIQSAAHNGFSSSSDDDVSSESEEE. The residue at position 429 (Ser429) is a Phosphoserine. Acidic residues predominate over residues 438 to 447; that stretch reads DYDDYESEYS. Residues 460-499 are a coiled coil; sequence AIQYLEEQLARMKVELQQLKKQELEKIRKERRLARGSKKR. Residues 488 to 507 show a composition bias toward basic residues; the sequence is KERRLARGSKKRGKRSKGRS. Residues 518-598 form the NET domain; it reads RDKKNKLKTV…RQYESSSGAS (81 aa). Polar residues-rich tracts occupy residues 594-620 and 652-671; these read SSGASNGLDGTSGVTRDASSLSPTSAG and SPLSQNGSPGQIQSAAHNGF. Phosphoserine is present on residues Ser615 and Ser659. The span at 675–686 shows a compositional bias: acidic residues; sequence SDDDVSSESEEE.

This sequence belongs to the BET family. As to quaternary structure, interacts with the TFIID subunit TAF7 and with acetylated histones H3 and H4. Post-translationally, phosphorylated by the casein kinase CK2 complex.

It is found in the nucleus. Its function is as follows. Transcription factor involved in the expression of a broad class of genes including snRNAs. Required for sporulation and DNA-damage repair. Prevents the spreading of SIR silencing at telomeres and protects histone H4, but not H3, from deacetylation. This is Bromodomain-containing factor 1 (BDF1) from Saccharomyces cerevisiae (strain ATCC 204508 / S288c) (Baker's yeast).